We begin with the raw amino-acid sequence, 362 residues long: tRNA-specific 2-thiouridylase MnmA (362 aa).

ATP-binding positions include 13–20 and methionine 39; that span reads GLSGGVDS. An interaction with target base in tRNA region spans residues 99–101; the sequence is NPD. The Nucleophile role is filled by cysteine 104. Cysteines 104 and 200 form a disulfide. Residue glycine 128 participates in ATP binding. The interaction with tRNA stretch occupies residues 150–152; sequence KDQ. Cysteine 200 functions as the Cysteine persulfide intermediate in the catalytic mechanism. The interval 310-311 is interaction with tRNA; it reads RY.

Belongs to the MnmA/TRMU family.

It is found in the cytoplasm. The enzyme catalyses S-sulfanyl-L-cysteinyl-[protein] + uridine(34) in tRNA + AH2 + ATP = 2-thiouridine(34) in tRNA + L-cysteinyl-[protein] + A + AMP + diphosphate + H(+). In terms of biological role, catalyzes the 2-thiolation of uridine at the wobble position (U34) of tRNA, leading to the formation of s(2)U34. This Vesicomyosocius okutanii subsp. Calyptogena okutanii (strain HA) protein is tRNA-specific 2-thiouridylase MnmA.